We begin with the raw amino-acid sequence, 444 residues long: N-succinylarginine dihydrolase (444 aa).

Substrate contacts are provided by residues alanine 19–serine 28, asparagine 110, and histidine 137–arginine 138. Glutamate 174 is an active-site residue. Arginine 214 lines the substrate pocket. Histidine 250 is a catalytic residue. 2 residues coordinate substrate: aspartate 252 and asparagine 362. Cysteine 368 serves as the catalytic Nucleophile.

This sequence belongs to the succinylarginine dihydrolase family. In terms of assembly, homodimer.

The enzyme catalyses N(2)-succinyl-L-arginine + 2 H2O + 2 H(+) = N(2)-succinyl-L-ornithine + 2 NH4(+) + CO2. Its pathway is amino-acid degradation; L-arginine degradation via AST pathway; L-glutamate and succinate from L-arginine: step 2/5. Its function is as follows. Catalyzes the hydrolysis of N(2)-succinylarginine into N(2)-succinylornithine, ammonia and CO(2). The protein is N-succinylarginine dihydrolase of Shewanella denitrificans (strain OS217 / ATCC BAA-1090 / DSM 15013).